A 291-amino-acid polypeptide reads, in one-letter code: tRNA pseudouridine synthase-like 1 (291 aa).

Asp-66 serves as the catalytic Nucleophile. Tyr-130 provides a ligand contact to substrate.

The protein belongs to the tRNA pseudouridine synthase TruA family.

The catalysed reaction is a uridine in tRNA = a pseudouridine in tRNA. The protein is tRNA pseudouridine synthase-like 1 (Pusl1) of Mus musculus (Mouse).